A 174-amino-acid chain; its full sequence is Large ribosomal subunit protein bL17 (174 aa).

Belongs to the bacterial ribosomal protein bL17 family. In terms of assembly, part of the 50S ribosomal subunit. Contacts protein L32.

This is Large ribosomal subunit protein bL17 from Ruminiclostridium cellulolyticum (strain ATCC 35319 / DSM 5812 / JCM 6584 / H10) (Clostridium cellulolyticum).